The chain runs to 279 residues: Odontogenic ameloblast-associated protein (279 aa).

The signal sequence occupies residues 1–15 (MKIIILLGFLGATLS). The segment covering 100-123 (AQGAQAGQVDPSQAQTPPQTQPGP) has biased composition (low complexity). Positions 100–125 (AQGAQAGQVDPSQAQTPPQTQPGPNH) are disordered. 2 O-linked (GalNAc...) threonine glycosylation sites follow: T115 and T119. Residues 127 to 129 (MPY) are interaction with ARHGEF5. O-linked (GalNAc...) threonine glycans are attached at residues T168, T244, T250, T251, T255, and T273.

This sequence belongs to the ODAM family. In terms of assembly, interacts (via C-terminus) with ARHGEF5. Post-translationally, O-glycosylated.

It is found in the secreted. The protein localises to the cytoplasm. The protein resides in the nucleus. Its function is as follows. Tooth-associated epithelia protein that probably plays a role in odontogenesis, the complex process that results in the initiation and generation of the tooth. May be incorporated in the enamel matrix at the end of mineralization process. Involved in the induction of RHOA activity via interaction with ARHGEF and expression of downstream factors such as ROCK. Plays a role in attachment of the junctional epithelium to the tooth surface. This chain is Odontogenic ameloblast-associated protein (ODAM), found in Macaca mulatta (Rhesus macaque).